The following is a 59-amino-acid chain: UPF0434 protein plu1633 (59 aa).

The protein belongs to the UPF0434 family.

This Photorhabdus laumondii subsp. laumondii (strain DSM 15139 / CIP 105565 / TT01) (Photorhabdus luminescens subsp. laumondii) protein is UPF0434 protein plu1633.